Reading from the N-terminus, the 542-residue chain is Cytochrome P450 79B1 (542 aa).

The chain crosses the membrane as a helical span at residues 21–41 (FSNMYLLTTLQAFVAITLVML). C478 is a heme binding site.

The protein belongs to the cytochrome P450 family. Heme is required as a cofactor.

The protein resides in the membrane. Converts tyrosine to para-hydrophenylacetaldoxime in para-hydroxybenzylglucosinolate biosynthesis. The sequence is that of Cytochrome P450 79B1 (CYP79B1) from Sinapis alba (White mustard).